Consider the following 146-residue polypeptide: Deoxyuridine 5'-triphosphate nucleotidohydrolase (146 aa).

Substrate is bound by residues R66 to G68, N79, and T83 to D85.

This sequence belongs to the dUTPase family. The cofactor is Mg(2+).

The catalysed reaction is dUTP + H2O = dUMP + diphosphate + H(+). The protein operates within pyrimidine metabolism; dUMP biosynthesis; dUMP from dCTP (dUTP route): step 2/2. This enzyme is involved in nucleotide metabolism: it produces dUMP, the immediate precursor of thymidine nucleotides and it decreases the intracellular concentration of dUTP so that uracil cannot be incorporated into DNA. The polypeptide is Deoxyuridine 5'-triphosphate nucleotidohydrolase (Citrifermentans bemidjiense (strain ATCC BAA-1014 / DSM 16622 / JCM 12645 / Bem) (Geobacter bemidjiensis)).